The primary structure comprises 1029 residues: Protein translocase subunit SecA (1029 aa).

ATP contacts are provided by residues Q143, 161-165, and D661; that span reads GEGKT. A disordered region spans residues 953 to 1029; the sequence is EQEQKKSQVQ…GKKYKNCCGK (77 aa). 2 stretches are compositionally biased toward basic and acidic residues: residues 966–975 and 984–996; these read LVARHEKAET and PEGR…ENGK. Residues C1015, C1017, C1026, and C1027 each coordinate Zn(2+).

Belongs to the SecA family. In terms of assembly, monomer and homodimer. Part of the essential Sec protein translocation apparatus which comprises SecA, SecYEG and auxiliary proteins SecDF. Other proteins may also be involved. The cofactor is Zn(2+).

It is found in the cell inner membrane. The protein resides in the cytoplasm. The enzyme catalyses ATP + H2O + cellular proteinSide 1 = ADP + phosphate + cellular proteinSide 2.. Functionally, part of the Sec protein translocase complex. Interacts with the SecYEG preprotein conducting channel. Has a central role in coupling the hydrolysis of ATP to the transfer of proteins into and across the cell membrane, serving as an ATP-driven molecular motor driving the stepwise translocation of polypeptide chains across the membrane. In Chlorobium phaeobacteroides (strain BS1), this protein is Protein translocase subunit SecA.